A 381-amino-acid polypeptide reads, in one-letter code: Succinyl-diaminopimelate desuccinylase (381 aa).

His72 is a binding site for Zn(2+). Residue Asp74 is part of the active site. Residue Asp105 coordinates Zn(2+). Glu139 acts as the Proton acceptor in catalysis. The Zn(2+) site is built by Glu140, Glu168, and His354.

Belongs to the peptidase M20A family. DapE subfamily. Homodimer. It depends on Zn(2+) as a cofactor. Requires Co(2+) as cofactor.

It catalyses the reaction N-succinyl-(2S,6S)-2,6-diaminopimelate + H2O = (2S,6S)-2,6-diaminopimelate + succinate. Its pathway is amino-acid biosynthesis; L-lysine biosynthesis via DAP pathway; LL-2,6-diaminopimelate from (S)-tetrahydrodipicolinate (succinylase route): step 3/3. Catalyzes the hydrolysis of N-succinyl-L,L-diaminopimelic acid (SDAP), forming succinate and LL-2,6-diaminopimelate (DAP), an intermediate involved in the bacterial biosynthesis of lysine and meso-diaminopimelic acid, an essential component of bacterial cell walls. This Shewanella sp. (strain MR-4) protein is Succinyl-diaminopimelate desuccinylase.